A 186-amino-acid polypeptide reads, in one-letter code: Secreted chorismate mutase (186 aa).

The signal sequence occupies residues 1 to 30 (MQPTHTLTRLTVIGKLIIASSFFLSLAVQA). One can recognise a Chorismate mutase domain in the interval 31–107 (QQCGQTAPLI…AAKAIQYRYR (77 aa)). A disulfide bond links Cys33 and Cys148. Residues Arg43, Lys54, Asp63, 99–103 (AKAIQ), and Arg127 each bind substrate.

As to quaternary structure, homodimer.

It is found in the periplasm. It carries out the reaction chorismate = prephenate. Its pathway is metabolic intermediate biosynthesis; prephenate biosynthesis; prephenate from chorismate: step 1/1. Functionally, catalyzes the Claisen rearrangement of chorismate to prephenate. May play some role in the pathogenicity. The polypeptide is Secreted chorismate mutase (pheA2) (Yersinia pestis).